Consider the following 595-residue polypeptide: Inactive glycosyltransferase 25 family member 3 (595 aa).

A signal peptide spans 1–22; it reads MRAARAAPLLQLLLLLGPWLEA. Asparagine 75, asparagine 153, asparagine 237, and asparagine 360 each carry an N-linked (GlcNAc...) asparagine glycan. Residues 548–595 are disordered; it reads DTETSSPWDDDSGRLISWSGSQKTLRSPRLDLTGSSGHSLQPQPRDEL. A compositionally biased stretch (polar residues) spans 580-589; the sequence is TGSSGHSLQP. A Prevents secretion from ER motif is present at residues 592-595; sequence RDEL.

Belongs to the glycosyltransferase 25 family. Ubiquitous. Highly expressed in secretory and nervous tissues.

It is found in the endoplasmic reticulum lumen. Its function is as follows. Probable cell adhesion protein involved in leukocyte transmigration across the blood-brain barrier. Does not express any beta-galactosyltransferase activity in vitro. The sequence is that of Inactive glycosyltransferase 25 family member 3 (CERCAM) from Homo sapiens (Human).